The chain runs to 205 residues: Glycerol-3-phosphate acyltransferase (205 aa).

The Periplasmic portion of the chain corresponds to methionine 1 to alanine 3. Residues isoleucine 4–valine 24 form a helical membrane-spanning segment. The Cytoplasmic portion of the chain corresponds to cysteine 25–lysine 52. The chain crosses the membrane as a helical span at residues glycine 53 to alanine 73. The Periplasmic segment spans residues tyrosine 74 to proline 80. Residues phenylalanine 81–glycine 101 traverse the membrane as a helical segment. Residues phenylalanine 102–alanine 111 lie on the Cytoplasmic side of the membrane. The chain crosses the membrane as a helical span at residues phenylalanine 112–leucine 132. Residues threonine 133–serine 137 lie on the Periplasmic side of the membrane. A helical transmembrane segment spans residues glycine 138 to phenylalanine 158. The Cytoplasmic portion of the chain corresponds to lysine 159–glutamate 205.

It belongs to the PlsY family. As to quaternary structure, probably interacts with PlsX.

The protein localises to the cell inner membrane. The catalysed reaction is sn-glycerol 3-phosphate + an acyl-CoA = a 1-acyl-sn-glycero-3-phosphate + CoA. It catalyses the reaction a fatty acyl-[ACP] + sn-glycerol 3-phosphate = a 1-acyl-sn-glycero-3-phosphate + holo-[ACP]. It functions in the pathway lipid metabolism; phospholipid metabolism. Catalyzes the transfer of an acyl group from acyl-ACP to glycerol-3-phosphate (G3P) to form lysophosphatidic acid (LPA). This enzyme can also utilize acyl-CoA as fatty acyl donor, but not acyl-PO(4). In Escherichia coli O8 (strain IAI1), this protein is Glycerol-3-phosphate acyltransferase.